Consider the following 531-residue polypeptide: Conglutin beta 1 (531 aa).

Residues 1–30 form the signal peptide; that stretch reads MGKMRVRFPTLVLVLGIVFLMAVSIGIAYG. A propeptide spanning residues 31-108 is cleaved from the precursor; it reads EKDVLKSHER…EQQQGSPSYS (78 aa). Basic and acidic residues-rich tracts occupy residues 37–51 and 79–99; these read SHER…EWQP and SGYE…REQE. 3 disordered regions span residues 37–124, 283–302, and 314–337; these read SHER…RFQT, QEYE…EGVI, and TKYA…LRSN. Positions 115-273 constitute a Cupin type-1 1 domain; the sequence is YHFNSQRFQT…TFNTRYEEIQ (159 aa). Over residues 286 to 302 the composition is skewed to basic and acidic residues; it reads EEQRRGQEQSHQDEGVI. Residues 316 to 337 show a composition bias toward polar residues; that stretch reads YAQSSSGKDKPSQSGPFNLRSN. The Cupin type-1 2 domain occupies 332–494; sequence FNLRSNEPIY…TFPGSAEDIE (163 aa). N444 is a glycosylation site (N-linked (GlcNAc...) asparagine). A disordered region spans residues 508-531; that stretch reads ALPQQQQQSEKEGRRGRRGPISSI.

Belongs to the 7S seed storage protein family.

In terms of biological role, seed storage protein. Accumulates during seed development and is hydrolyzed after germination to provide a carbon and nitrogen source for the developing seedling. Has a lectin-like activity. The sequence is that of Conglutin beta 1 from Lupinus albus (White lupine).